Reading from the N-terminus, the 534-residue chain is CTP synthase (534 aa).

Positions Met1 to Leu267 are amidoligase domain. CTP is bound at residue Ser13. Ser13 contributes to the UTP binding site. Ser14–Ile19 serves as a coordination point for ATP. Tyr54 contacts L-glutamine. Position 71 (Asp71) interacts with ATP. 2 residues coordinate Mg(2+): Asp71 and Glu141. CTP is bound by residues Asp148–Glu150, Lys188–Gln193, and Lys224. UTP contacts are provided by residues Lys188–Gln193 and Lys224. A Glutamine amidotransferase type-1 domain is found at Thr292–Glu534. L-glutamine is bound at residue Gly354. The Nucleophile; for glutamine hydrolysis role is filled by Cys381. Residues Leu382–Gln385, Glu405, and Arg462 each bind L-glutamine. Catalysis depends on residues His507 and Glu509.

The protein belongs to the CTP synthase family. As to quaternary structure, homotetramer.

It catalyses the reaction UTP + L-glutamine + ATP + H2O = CTP + L-glutamate + ADP + phosphate + 2 H(+). It carries out the reaction L-glutamine + H2O = L-glutamate + NH4(+). The enzyme catalyses UTP + NH4(+) + ATP = CTP + ADP + phosphate + 2 H(+). Its pathway is pyrimidine metabolism; CTP biosynthesis via de novo pathway; CTP from UDP: step 2/2. Its activity is regulated as follows. Allosterically activated by GTP, when glutamine is the substrate; GTP has no effect on the reaction when ammonia is the substrate. The allosteric effector GTP functions by stabilizing the protein conformation that binds the tetrahedral intermediate(s) formed during glutamine hydrolysis. Inhibited by the product CTP, via allosteric rather than competitive inhibition. Its function is as follows. Catalyzes the ATP-dependent amination of UTP to CTP with either L-glutamine or ammonia as the source of nitrogen. Regulates intracellular CTP levels through interactions with the four ribonucleotide triphosphates. This Herpetosiphon aurantiacus (strain ATCC 23779 / DSM 785 / 114-95) protein is CTP synthase.